A 208-amino-acid chain; its full sequence is Ciliary-associated calcium-binding coiled-coil protein 1 (208 aa).

Testis-specific. Expressed in spermatocytes and round spermatids (at protein level).

The protein localises to the cytoplasm. It is found in the cytoskeleton. It localises to the microtubule organizing center. Its subcellular location is the centrosome. The protein resides in the cell projection. The protein localises to the cilium. It is found in the flagellum. Its function is as follows. Calcium-binding protein. May be involved in the control of sperm flagellar movement. The protein is Ciliary-associated calcium-binding coiled-coil protein 1 of Mus musculus (Mouse).